The following is a 534-amino-acid chain: Autophagic-related protein 16.2 (534 aa).

WD repeat units follow at residues 243-281 (THDGEVHDVEWMSDDTFATAGSDSKVQIWRVSPNKTDAS), 288-329 (GCLG…STFS), 330-368 (GHTDKVSSARLFQSHNVISGSADRTIKNWDISSIRCLKS), 371-411 (VGST…ATYS), 413-452 (ELGQKVSSLDISMDGLQVLASSRDDTLSLIDVRNYGIIHL), 459-498 (KTSCDSTRAIFSSTGEYVLAGSSNSSVFIWNTKTTKLEKV), and 504-534 (SDSAQIMSLAWNPSGRGLLACDRQKTCTLWR).

This sequence belongs to the WD repeat tipD family. Homodimer (via N-terminus). Most likely a component of a complex at least containing atg-5, lgg-3, atg-16.1 and/or atg-16.2. Interacts (via N-terminus) with atg-16.1 (via N-terminus). Interacts (via N-terminus) with atg-5. Interacts (via WD 5-6 repeats) with lgg-2; the interaction is direct. As to expression, expressed in neurons, pharyngeal muscles, body wall muscle cells and intestinal cells.

Its subcellular location is the cytoplasm. The protein localises to the cell membrane. Most likely a component of the atg-5-atg-12-atg-16.1/atg-16.2 complex, which is recruited to the preautophagosomal membrane and associates with lgg-2 to promote autophagosome formation. Plays a role in the recruitment of lipidated lgg-1 probably to the autophagosome membrane to promote autophagosome formation. Furthermore, association with atg-5 is required for the nucleation of lgg-1 positive autophagosomes. Although its role in autophagosome formation may be distinct to the role of atg-16.2, it functions in a partially redundant manner with atg-16.1 to regulate autophagic processes. In a daf-18/PTEN- and daf-16/FOXO-dependent manner, required for maintaining the numbers of germ stem cell progenitors in the gonad during the late phases of larval development. This chain is Autophagic-related protein 16.2, found in Caenorhabditis elegans.